The chain runs to 387 residues: Chromatin modification-related protein EAF3 (387 aa).

Residues 52–96 (NTHKRKRGPRASLPAAGATPDGDDSNDKNRHFSPKEGKPDVPADL) are disordered. The span at 76 to 92 (SNDKNRHFSPKEGKPDV) shows a compositional bias: basic and acidic residues. The Tudor-knot domain occupies 100-126 (NEDKICYYVHYKGWKNTWDEWVGEERV). Positions 159-197 (PPEALSETASPAPTTKRKSMASKDSPAEGPRPVKRRGGL) are disordered. Residues 211 to 385 (KRKEIALVVP…ASPAYEALSK (175 aa)) enclose the MRG domain.

Belongs to the MRG family. In terms of assembly, component of the NuA4 histone acetyltransferase complex.

Its subcellular location is the nucleus. Functionally, involved in deacetylation of histones, chromatin assembly and chromosome segregation. May act as a transcriptional oscillator, directing histone deacetylases to specific chromosomal domains. Component of the NuA4 histone acetyltransferase complex which is involved in transcriptional activation of selected genes principally by acetylation of nucleosomal histone H4 and H2A. The NuA4 complex is also involved in DNA repair. The protein is Chromatin modification-related protein EAF3 (EAF3) of Yarrowia lipolytica (strain CLIB 122 / E 150) (Yeast).